The primary structure comprises 146 residues: Putative pre-16S rRNA nuclease (146 aa).

This sequence belongs to the YqgF nuclease family.

It localises to the cytoplasm. Its function is as follows. Could be a nuclease involved in processing of the 5'-end of pre-16S rRNA. This Pseudomonas syringae pv. syringae (strain B728a) protein is Putative pre-16S rRNA nuclease.